Here is a 475-residue protein sequence, read N- to C-terminus: tRNA-2-methylthio-N(6)-dimethylallyladenosine synthase (475 aa).

The segment at 1-21 is disordered; it reads MTTAPTSPALPASSDTAPTGP. Positions 24-145 constitute an MTTase N-terminal domain; the sequence is RGLHVITWGC…LPEMVARAAR (122 aa). Residues Cys-33, Cys-69, Cys-108, Cys-186, Cys-190, and Cys-193 each coordinate [4Fe-4S] cluster. In terms of domain architecture, Radical SAM core spans 172 to 404; sequence TQGNLTAFLT…QALLREQQDA (233 aa). Positions 407–469 constitute a TRAM domain; sequence ADMVGTVQEI…TNSLGGTLIR (63 aa).

This sequence belongs to the methylthiotransferase family. MiaB subfamily. In terms of assembly, monomer. [4Fe-4S] cluster is required as a cofactor.

The protein resides in the cytoplasm. The enzyme catalyses N(6)-dimethylallyladenosine(37) in tRNA + (sulfur carrier)-SH + AH2 + 2 S-adenosyl-L-methionine = 2-methylsulfanyl-N(6)-dimethylallyladenosine(37) in tRNA + (sulfur carrier)-H + 5'-deoxyadenosine + L-methionine + A + S-adenosyl-L-homocysteine + 2 H(+). Functionally, catalyzes the methylthiolation of N6-(dimethylallyl)adenosine (i(6)A), leading to the formation of 2-methylthio-N6-(dimethylallyl)adenosine (ms(2)i(6)A) at position 37 in tRNAs that read codons beginning with uridine. This is tRNA-2-methylthio-N(6)-dimethylallyladenosine synthase from Gluconobacter oxydans (strain 621H) (Gluconobacter suboxydans).